We begin with the raw amino-acid sequence, 164 residues long: Peptidyl-prolyl cis-trans isomerase A-like 4A (164 aa).

In terms of domain architecture, PPIase cyclophilin-type spans 7–163; the sequence is FFDITVDGKP…KKITIADCGQ (157 aa).

It belongs to the cyclophilin-type PPIase family. PPIase A subfamily. In terms of tissue distribution, highly expressed in brain, ovary and mammary gland. Moderately expressed in lung, salivary gland, kidney, skin, adipose tissue, intestine and spleen. Weakly expressed in skeletal muscle, liver and stomach. Expressed in pleiomorphic and undifferentiated liposarcomas, osteosarcomas and breast carcinomas.

It localises to the cytoplasm. It carries out the reaction [protein]-peptidylproline (omega=180) = [protein]-peptidylproline (omega=0). Functionally, PPIases accelerate the folding of proteins. It catalyzes the cis-trans isomerization of proline imidic peptide bonds in oligopeptides. The sequence is that of Peptidyl-prolyl cis-trans isomerase A-like 4A from Homo sapiens (Human).